Reading from the N-terminus, the 412-residue chain is Zinc finger protein 260 (412 aa).

13 C2H2-type zinc fingers span residues 27–49, 55–77, 83–105, 136–158, 164–186, 192–214, 220–242, 248–270, 276–298, 304–326, 332–354, 360–382, and 388–412; these read YECNECRKTFSLKQNLVEHKKMH, HECTECGKVCSRVSSLTLHLRSH, YKCNKCGKAFSQKENFLSHQKHH, YACKECGKAFNGKAYLTEHEKIH, FECNQCGRAFSQKQYLIKHQNIH, FKCSECGKAFSQKENLIIHQRIH, YECKGCGKAFIQKSSLIRHQRSH, YTCKECGKAFSGKSNLTEHEKIH, YKCNECGTIFRQKQYLIKHHNIH, YECNKCGKAFSRITSLIVHVRIH, YECKVCGKAFCQSSSLTVHMRSH, YGCNECGKAFSQFSTLALHMRIH, and YQCSECGKAFSQKSHHIRHQRIHTH.

Belongs to the krueppel C2H2-type zinc-finger protein family. In terms of assembly, binds DNA. Interacts with GATA4.

Its subcellular location is the nucleus. In terms of biological role, transcription factor that acts as a cardiac regulator and an effector of alpha1-adrenergic signaling. Binds to PE response elements (PERE) present in the promoter of genes such as ANF/NPPA and acts as a direct transcriptional activator of NPPA. Also acts as a cofactor with GATA4, a key cardiac regulator. The polypeptide is Zinc finger protein 260 (ZNF260) (Homo sapiens (Human)).